A 334-amino-acid polypeptide reads, in one-letter code: Glycerol-3-phosphate dehydrogenase [NAD(P)+] (334 aa).

NADPH contacts are provided by Ser14, Tyr15, His35, and Lys109. Residues Lys109, Gly138, and Thr140 each contribute to the sn-glycerol 3-phosphate site. Residue Ala142 coordinates NADPH. 5 residues coordinate sn-glycerol 3-phosphate: Lys194, Asp247, Ser257, Arg258, and Asn259. The active-site Proton acceptor is the Lys194. Residue Arg258 participates in NADPH binding. Positions 282 and 284 each coordinate NADPH.

This sequence belongs to the NAD-dependent glycerol-3-phosphate dehydrogenase family.

It localises to the cytoplasm. The enzyme catalyses sn-glycerol 3-phosphate + NAD(+) = dihydroxyacetone phosphate + NADH + H(+). The catalysed reaction is sn-glycerol 3-phosphate + NADP(+) = dihydroxyacetone phosphate + NADPH + H(+). Its pathway is membrane lipid metabolism; glycerophospholipid metabolism. Its function is as follows. Catalyzes the reduction of the glycolytic intermediate dihydroxyacetone phosphate (DHAP) to sn-glycerol 3-phosphate (G3P), the key precursor for phospholipid synthesis. The chain is Glycerol-3-phosphate dehydrogenase [NAD(P)+] from Tolumonas auensis (strain DSM 9187 / NBRC 110442 / TA 4).